Consider the following 605-residue polypeptide: MRAMACVRRVRNFCIVAHIDHGKSTLADRLIERTRAVEERLQHAQMTDNMELERERGITIKSHAVCIPYTDAHGTEYVLNFVDTPGHADFAYEVSRAIAACEGALLVVDATQGVESQTISNLYLVLEHNLEIIPVINKIDLPTADVPRVLQQVEHDLGLDPASSVLISAKTGENVDALFDAIITRIPPPQGSGTAALQALVFDCHYDQYRGVVVHIRVFEGQVTSGMVIRFMSNGAEYRVEETGVFVFNLIAREALCAGDVGYLSANVKTVSDVQVGDTITDASCPCDTPRAGFRRVKPVVFSSVYPVDTDECEQLREALERLALNDASISWERDSSLALGHGFRCGFLGLLHLEVVQQRLEREFNQTVIFTAPQVQYYVFLKTGQRIVCDNPAHYPLEQEIAQVHEPYIRATIITPTEVLGAVMTLCIEKRAYQTAVNYLDQKRVELVYEMPLAEILFGFYDRLKSISHGYASFDYELIESKLTDLVKVDILINGKPVDALAQLCYRPHARRRAQAVCARLKEEISRQQFKIAIQGSIGGQIISRETVSPFRKDVLAKCYGGDITRKRKLLEKQKEGKKRMKMVGDVEIPQTAFLSVLKEASDA.

In terms of domain architecture, tr-type G spans arginine 8–glutamine 190. Residues aspartate 20 to threonine 25 and asparagine 137 to aspartate 140 contribute to the GTP site.

The protein belongs to the TRAFAC class translation factor GTPase superfamily. Classic translation factor GTPase family. LepA subfamily.

It is found in the cell inner membrane. The catalysed reaction is GTP + H2O = GDP + phosphate + H(+). Its function is as follows. Required for accurate and efficient protein synthesis under certain stress conditions. May act as a fidelity factor of the translation reaction, by catalyzing a one-codon backward translocation of tRNAs on improperly translocated ribosomes. Back-translocation proceeds from a post-translocation (POST) complex to a pre-translocation (PRE) complex, thus giving elongation factor G a second chance to translocate the tRNAs correctly. Binds to ribosomes in a GTP-dependent manner. The polypeptide is Elongation factor 4 (Treponema pallidum (strain Nichols)).